Consider the following 277-residue polypeptide: Outer membrane lipoprotein 1 (277 aa).

The signal sequence occupies residues 1 to 19; the sequence is MSFKKILGVALVSALALTA. A lipid anchor (N-palmitoyl cysteine) is attached at Cys-20. Cys-20 carries the S-diacylglycerol cysteine lipid modification.

It belongs to the NlpA lipoprotein family.

It is found in the cell outer membrane. This Mannheimia haemolytica (Pasteurella haemolytica) protein is Outer membrane lipoprotein 1 (plpA).